Reading from the N-terminus, the 156-residue chain is Small ribosomal subunit protein uS7 (156 aa).

It belongs to the universal ribosomal protein uS7 family. Part of the 30S ribosomal subunit. Contacts proteins S9 and S11.

In terms of biological role, one of the primary rRNA binding proteins, it binds directly to 16S rRNA where it nucleates assembly of the head domain of the 30S subunit. Is located at the subunit interface close to the decoding center, probably blocks exit of the E-site tRNA. The chain is Small ribosomal subunit protein uS7 from Renibacterium salmoninarum (strain ATCC 33209 / DSM 20767 / JCM 11484 / NBRC 15589 / NCIMB 2235).